Here is a 369-residue protein sequence, read N- to C-terminus: MPRRAEILRLPMAAPDDVSAIAASLRDGRLDPGDVVAVFAKTEGNGCVNDFTRPLAVQALRGLFGPLIGEAALGRIAMVMSGGTEGGLSPHWLVIAAREAAGPGPALAVGQARTPPLAAEDLGRRAQVEMVAAGVRAAMREAGLDAGQVHYVQVKCPLLTSERIGAALARGAAPATRDTLKSMGLSRAAAALGAALALGEVPAAAIGETVAETDPGRHARRCGASAGVELLDHEVVVMGMSPDWTGPLVIDHAVMADAIDLRPVAACLGRLGLLGPDGFVDEAGRARLAALLAKAEASADGAIRGRRHTMLTDSDIAPTRHARGFVAGALAGLVGATDLFVSGGAEFQGPDGGGPVAVIARRSGAAGPA.

Residues 1 to 100 are RU A; sequence MPRRAEILRL…HWLVIAAREA (100 aa). Residues Arg-53 and 81 to 82 contribute to the substrate site; that span reads SG. Positions 106 to 242 are RU B; sequence ALAVGQARTP…HEVVVMGMSP (137 aa). The active site involves Lys-155. Substrate-binding positions include Arg-187 and 225–226; that span reads SA. Ser-225 functions as the Nucleophile in the catalytic mechanism. The tract at residues 248-369 is RU C; it reads LVIDHAVMAD…ARRSGAAGPA (122 aa). Glu-296 contributes to the Mg(2+) binding site. Substrate contacts are provided by residues Arg-323 and 342 to 343; that span reads SG. Mg(2+)-binding residues include Ala-345, Gln-348, Gly-349, Pro-350, and Gly-353.

The protein belongs to the cyclic amide hydrolase (CyAH) family. As to quaternary structure, homotetramer.

It catalyses the reaction cyanurate + H2O = 1-carboxybiuret + H(+). It participates in xenobiotic degradation; atrazine degradation; biuret from cyanurate: step 1/1. With respect to regulation, inhibited by barbituric acid. In terms of biological role, responsible for the hydrolysis of cyanuric acid, an intermediate formed during catabolism of s-triazine based compounds in herbicides such as atrazine and polymers such as melamine. Catalyzes the hydrolytic opening of the s-triazine ring of cyanuric acid (2,4,6-trihydroxy-s-triazine) to yield carbon dioxide and carboxybiuret, which spontaneously decarboxylates to biuret. The polypeptide is Cyanuric acid amidohydrolase (Methylobacterium sp. (strain 4-46)).